A 215-amino-acid polypeptide reads, in one-letter code: MSKAIVLDSHLKEKGSMELPKRYEGINSHNLYLYVKHYLSSARANTAKSKNRAEVSGGGRKPWAQKGGGRARAGSITSPVFVGGGVSHGATNKRNYNLKINKKQKRLALEYALEEKAQANKLFVVEKIAIKGVVEDNKRKHLTKEANQMFQALEQRDTLFVCMNMDEYTELAFSNLKKCLIIDVNELNAYLLAAFSSVVMEEAAFQHIVQDKTEE.

Residues 46–72 (TAKSKNRAEVSGGGRKPWAQKGGGRAR) form a disordered region. The span at 56-71 (SGGGRKPWAQKGGGRA) shows a compositional bias: gly residues.

It belongs to the universal ribosomal protein uL4 family. As to quaternary structure, part of the 50S ribosomal subunit.

Its function is as follows. One of the primary rRNA binding proteins, this protein initially binds near the 5'-end of the 23S rRNA. It is important during the early stages of 50S assembly. It makes multiple contacts with different domains of the 23S rRNA in the assembled 50S subunit and ribosome. Forms part of the polypeptide exit tunnel. This Helicobacter pylori (strain G27) protein is Large ribosomal subunit protein uL4.